The following is a 506-amino-acid chain: Histidine ammonia-lyase (506 aa).

Residues 143–145 (ASG) constitute a cross-link (5-imidazolinone (Ala-Gly)). 2,3-didehydroalanine (Ser) is present on serine 144.

The protein belongs to the PAL/histidase family. Contains an active site 4-methylidene-imidazol-5-one (MIO), which is formed autocatalytically by cyclization and dehydration of residues Ala-Ser-Gly.

The protein resides in the cytoplasm. The catalysed reaction is L-histidine = trans-urocanate + NH4(+). It functions in the pathway amino-acid degradation; L-histidine degradation into L-glutamate; N-formimidoyl-L-glutamate from L-histidine: step 1/3. The polypeptide is Histidine ammonia-lyase (Salmonella choleraesuis (strain SC-B67)).